The primary structure comprises 133 residues: Ribonuclease P protein component (133 aa).

This sequence belongs to the RnpA family. In terms of assembly, consists of a catalytic RNA component (M1 or rnpB) and a protein subunit.

It catalyses the reaction Endonucleolytic cleavage of RNA, removing 5'-extranucleotides from tRNA precursor.. Functionally, RNaseP catalyzes the removal of the 5'-leader sequence from pre-tRNA to produce the mature 5'-terminus. It can also cleave other RNA substrates such as 4.5S RNA. The protein component plays an auxiliary but essential role in vivo by binding to the 5'-leader sequence and broadening the substrate specificity of the ribozyme. This chain is Ribonuclease P protein component, found in Paramagnetospirillum magneticum (strain ATCC 700264 / AMB-1) (Magnetospirillum magneticum).